A 124-amino-acid chain; its full sequence is Large ribosomal subunit protein bL17 (124 aa).

It belongs to the bacterial ribosomal protein bL17 family. As to quaternary structure, part of the 50S ribosomal subunit. Contacts protein L32.

The protein is Large ribosomal subunit protein bL17 of Trichlorobacter lovleyi (strain ATCC BAA-1151 / DSM 17278 / SZ) (Geobacter lovleyi).